The chain runs to 999 residues: Sarcoplasmic/endoplasmic reticulum calcium ATPase 3 (999 aa).

An N-acetylmethionine modification is found at Met1. Residues 1–48 are Cytoplasmic-facing; sequence MEAAHLLPAADVLRHFSVTAEGGLSPAQVTGARERYGPNELPSEEGKS. Residue Ser17 is modified to Phosphoserine. Position 19 is a phosphothreonine (Thr19). Residue Ser25 is modified to Phosphoserine. The chain crosses the membrane as a helical span at residues 49–69; that stretch reads LWELVLEQFEDLLVRILLLAA. Topologically, residues 70–89 are lumenal; the sequence is LVSFVLAWFEEGEETTTAFV. The chain crosses the membrane as a helical span at residues 90-110; the sequence is EPLVIMLILVANAIVGVWQER. Over 111-253 the chain is Cytoplasmic; that stretch reads NAESAIEALK…PERTPLQRKL (143 aa). Residues 254–273 traverse the membrane as a helical segment; it reads DEFGRQLSHAISVICVAVWV. Over 274–295 the chain is Lumenal; the sequence is INIGHFADPAHGGSWLRGAVYY. Residues 296–313 traverse the membrane as a helical segment; the sequence is FKIAVALAVAAIPEGLPA. 4 residues coordinate Ca(2+): Val304, Ala305, Ile307, and Glu309. Residues 314-757 are Cytoplasmic-facing; it reads VITTCLALGT…EEGRAIYSNM (444 aa). The active-site 4-aspartylphosphate intermediate is Asp351. Mg(2+) contacts are provided by Asp351 and Thr353. Residue Thr353 participates in ATP binding. The interval 370-400 is interaction with phospholamban 1; sequence AEADAGSCLLHEFTISGTTYTPEGEVRQGDQ. At Thr415 the chain carries Phosphothreonine. Glu442, Arg489, Lys515, Arg560, Thr625, Gly626, and Asp627 together coordinate ATP. Phosphoserine is present on Ser662. Residues Arg678 and Lys684 each coordinate ATP. Asp703 contributes to the Mg(2+) binding site. Position 706 (Asn706) interacts with ATP. A helical transmembrane segment spans residues 758 to 777; it reads KQFIRYLISSNVGEVVCIFL. Asn768 and Glu771 together coordinate Ca(2+). Residues 778–787 are Lumenal-facing; the sequence is TAILGLPEAL. Residues 788-808 traverse the membrane as a helical segment; the sequence is IPVQLLWVNLVTDGLPATALG. Residues 788-808 are interaction with phospholamban 2; that stretch reads IPVQLLWVNLVTDGLPATALG. Residues Asn796, Thr799, and Asp800 each coordinate Ca(2+). At 809–828 the chain is on the cytoplasmic side; sequence FNPPDLDIMEKLPRSPREAL. Residues 829-851 traverse the membrane as a helical segment; sequence ISGWLFFRYLAIGVYVGLATVAA. The Lumenal segment spans residues 852–897; the sequence is ATWWFVYDAEGPHINFYQLRNFLKCSEDNPLFAGIDCEVFESRFPT. Residues 898 to 917 form a helical membrane-spanning segment; the sequence is TMALSVLVTIEMCNALNSVS. Residue Glu908 participates in Ca(2+) binding. The Cytoplasmic segment spans residues 918–930; that stretch reads ENQSLLRMPPWMN. A helical membrane pass occupies residues 931-949; it reads PWLLVAVAMSMALHFLILL. At 950–964 the chain is on the lumenal side; sequence VPPLPLIFQVTPLSG. A helical transmembrane segment spans residues 965–985; sequence RQWVVVLQISLPVILLDEALK. Over 986-999 the chain is Cytoplasmic; the sequence is YLSRNHMHEEMSQK.

Belongs to the cation transport ATPase (P-type) (TC 3.A.3) family. Type IIA subfamily. In terms of assembly, interacts with sarcolipin (SLN). Interacts with phospholamban (PLN). Interacts with myoregulin (MRLN). Interacts with DWORF. Interacts with VMP1. Interacts with TUNAR; the interaction occurs at low levels in low glucose conditions and is increased by high glucose levels. Mg(2+) serves as cofactor. As to expression, found in most tissues. Most abundant in thymus, trachea, salivary gland, spleen, bone marrow, lymph node, peripheral leukocytes, pancreas and colon. Also detected in fetal tissues. Expressed in cell lineages of hematopoietic, epithelial, or embryonic origin and also expressed in several cancer cell lines.

It localises to the nucleus membrane. It is found in the endoplasmic reticulum membrane. Its subcellular location is the sarcoplasmic reticulum membrane. It catalyses the reaction Ca(2+)(in) + ATP + H2O = Ca(2+)(out) + ADP + phosphate + H(+). Its activity is regulated as follows. Inhibited by sarcolipin (SLN), phospholamban (PLN) and myoregulin (MRLN). Enhanced by DWORF; DWORF increases activity by displacing sarcolipin (SLN), phospholamban (PLN) and myoregulin (MRLN). Functionally, this magnesium-dependent enzyme catalyzes the hydrolysis of ATP coupled with the transport of calcium. Transports calcium ions from the cytosol into the sarcoplasmic/endoplasmic reticulum lumen. Contributes to calcium sequestration involved in muscular excitation/contraction. The polypeptide is Sarcoplasmic/endoplasmic reticulum calcium ATPase 3 (Homo sapiens (Human)).